We begin with the raw amino-acid sequence, 219 residues long: MAYPGKKSKSYETPRHPWQEARMAAEVQLVKAYGLRNKKEVWKAASMLRMYRSEARKLLAQVASGGQEGELEGHYATQSEEILSKLIRYGIIKADANVDDILSLKTENILERRLQTQVLRLGLARTVIQARQFITHGHIAINGRKATIPGMLVSKEDEMHIGYYGSSPLMSESHSERPVQVASFLADSATTLKAAAEAKQARERPPERGGGRKKRGGRR.

Residues Arg112–His174 enclose the S4 RNA-binding domain. A disordered region spans residues Lys193–Arg219. Basic and acidic residues predominate over residues Lys199–Gly210.

It belongs to the universal ribosomal protein uS4 family. As to quaternary structure, part of the 30S ribosomal subunit. Contacts protein S5. The interaction surface between S4 and S5 is involved in control of translational fidelity.

Functionally, one of the primary rRNA binding proteins, it binds directly to 16S rRNA where it nucleates assembly of the body of the 30S subunit. In terms of biological role, with S5 and S12 plays an important role in translational accuracy. This is Small ribosomal subunit protein uS4 from Methanosarcina mazei (strain ATCC BAA-159 / DSM 3647 / Goe1 / Go1 / JCM 11833 / OCM 88) (Methanosarcina frisia).